A 384-amino-acid chain; its full sequence is 8-amino-7-oxononanoate synthase (384 aa).

Residue Arg-21 coordinates substrate. Position 108–109 (108–109) interacts with pyridoxal 5'-phosphate; sequence GF. His-133 provides a ligand contact to substrate. 3 residues coordinate pyridoxal 5'-phosphate: Ser-179, His-207, and Thr-233. Lys-236 carries the post-translational modification N6-(pyridoxal phosphate)lysine. Residue Thr-352 coordinates substrate.

The protein belongs to the class-II pyridoxal-phosphate-dependent aminotransferase family. BioF subfamily. As to quaternary structure, homodimer. The cofactor is pyridoxal 5'-phosphate.

It catalyses the reaction 6-carboxyhexanoyl-[ACP] + L-alanine + H(+) = (8S)-8-amino-7-oxononanoate + holo-[ACP] + CO2. It participates in cofactor biosynthesis; biotin biosynthesis. Its function is as follows. Catalyzes the decarboxylative condensation of pimeloyl-[acyl-carrier protein] and L-alanine to produce 8-amino-7-oxononanoate (AON), [acyl-carrier protein], and carbon dioxide. This is 8-amino-7-oxononanoate synthase from Escherichia coli O157:H7.